The primary structure comprises 434 residues: Isocitrate lyase (434 aa).

91–93 lines the substrate pocket; it reads SGW. Aspartate 157 provides a ligand contact to Mg(2+). Residue cysteine 195 is the Proton acceptor of the active site. Substrate contacts are provided by residues 196 to 197, arginine 232, 317 to 321, and threonine 351; these read GH and NCSPS.

Belongs to the isocitrate lyase/PEP mutase superfamily. Isocitrate lyase family. As to quaternary structure, homotetramer. Requires Mg(2+) as cofactor.

The catalysed reaction is D-threo-isocitrate = glyoxylate + succinate. It participates in carbohydrate metabolism; glyoxylate cycle; (S)-malate from isocitrate: step 1/2. Its function is as follows. Involved in the metabolic adaptation in response to environmental changes. Catalyzes the reversible formation of succinate and glyoxylate from isocitrate, a key step of the glyoxylate cycle, which operates as an anaplerotic route for replenishing the tricarboxylic acid cycle during growth on fatty acid substrates. In Salmonella typhimurium (strain LT2 / SGSC1412 / ATCC 700720), this protein is Isocitrate lyase (aceA).